We begin with the raw amino-acid sequence, 360 residues long: GDSL esterase/lipase At1g06990 (360 aa).

Residues 1–22 (MLIHVIIFMIITTMQFSTTCHA) form the signal peptide. 2 N-linked (GlcNAc...) asparagine glycosylation sites follow: Asn26 and Asn31. Residue Ser44 is the Nucleophile of the active site. Residues Asn73, Asn126, and Asn272 are each glycosylated (N-linked (GlcNAc...) asparagine). Catalysis depends on residues Asp335 and His338.

The protein belongs to the 'GDSL' lipolytic enzyme family.

The protein resides in the secreted. The sequence is that of GDSL esterase/lipase At1g06990 from Arabidopsis thaliana (Mouse-ear cress).